A 1463-amino-acid polypeptide reads, in one-letter code: DNA polymerase III PolC-type (1463 aa).

The Exonuclease domain maps to 425 to 581 (YVVFDVETTG…YDAEATGRLL (157 aa)).

It belongs to the DNA polymerase type-C family. PolC subfamily.

The protein localises to the cytoplasm. It carries out the reaction DNA(n) + a 2'-deoxyribonucleoside 5'-triphosphate = DNA(n+1) + diphosphate. Functionally, required for replicative DNA synthesis. This DNA polymerase also exhibits 3' to 5' exonuclease activity. The sequence is that of DNA polymerase III PolC-type from Streptococcus suis (strain 98HAH33).